The chain runs to 99 residues: DNA-directed RNA polymerase subunit Rpo11 (99 aa).

Belongs to the archaeal Rpo11/eukaryotic RPB11/RPC19 RNA polymerase subunit family. In terms of assembly, part of the RNA polymerase complex.

It localises to the cytoplasm. The enzyme catalyses RNA(n) + a ribonucleoside 5'-triphosphate = RNA(n+1) + diphosphate. Functionally, DNA-dependent RNA polymerase (RNAP) catalyzes the transcription of DNA into RNA using the four ribonucleoside triphosphates as substrates. This chain is DNA-directed RNA polymerase subunit Rpo11, found in Aeropyrum pernix (strain ATCC 700893 / DSM 11879 / JCM 9820 / NBRC 100138 / K1).